Here is a 126-residue protein sequence, read N- to C-terminus: Aspartate 1-decarboxylase (126 aa).

Ser25 acts as the Schiff-base intermediate with substrate; via pyruvic acid in catalysis. Position 25 is a pyruvic acid (Ser) (Ser25). Thr57 serves as a coordination point for substrate. Tyr58 serves as the catalytic Proton donor. Substrate is bound at residue 73-75; the sequence is GAA.

This sequence belongs to the PanD family. In terms of assembly, heterooctamer of four alpha and four beta subunits. The cofactor is pyruvate. Is synthesized initially as an inactive proenzyme, which is activated by self-cleavage at a specific serine bond to produce a beta-subunit with a hydroxyl group at its C-terminus and an alpha-subunit with a pyruvoyl group at its N-terminus.

The protein resides in the cytoplasm. The catalysed reaction is L-aspartate + H(+) = beta-alanine + CO2. The protein operates within cofactor biosynthesis; (R)-pantothenate biosynthesis; beta-alanine from L-aspartate: step 1/1. Catalyzes the pyruvoyl-dependent decarboxylation of aspartate to produce beta-alanine. The polypeptide is Aspartate 1-decarboxylase (Citrobacter koseri (strain ATCC BAA-895 / CDC 4225-83 / SGSC4696)).